We begin with the raw amino-acid sequence, 190 residues long: CDP-diacylglycerol--glycerol-3-phosphate 3-phosphatidyltransferase (190 aa).

At 6–17 the chain is on the cytoplasmic side; the sequence is GVFNIPMYLTLF. The helical transmembrane segment at 18–42 threads the bilayer; sequence RIIMVPCFVAVFYWPIYWSPMLCTL. The Periplasmic portion of the chain corresponds to 43 to 65; sequence IFFIAAITDWFDGFLARRWNQTS. A helical transmembrane segment spans residues 66–86; the sequence is RIGGFLDPIADKIMIITALIL. Over 87-91 the chain is Cytoplasmic; it reads ISEHF. A helical transmembrane segment spans residues 92 to 112; that stretch reads HVWWMTLPISSIIIREILISS. Residues 113 to 150 are Periplasmic-facing; it reads LRECIARVDNKNNISVIWLSKVKTFAQMLALIALLCRL. The chain crosses the membrane as a helical span at residues 151–173; the sequence is NEWTVIMGVISLYTAMLLTLWSM. Residues 174-186 are Cytoplasmic-facing; that stretch reads CYYVYSVSSILLQ.

Belongs to the CDP-alcohol phosphatidyltransferase class-I family.

It is found in the cell inner membrane. The catalysed reaction is a CDP-1,2-diacyl-sn-glycerol + sn-glycerol 3-phosphate = a 1,2-diacyl-sn-glycero-3-phospho-(1'-sn-glycero-3'-phosphate) + CMP + H(+). It functions in the pathway phospholipid metabolism; phosphatidylglycerol biosynthesis; phosphatidylglycerol from CDP-diacylglycerol: step 1/2. Catalyzes the conversion of cytidine diphosphate diacylglycerol (CDP-DG) and glycerol 3-phosphate into phosphatidylglycerol. Essential for the synthesis of anionic phospholipids, thereby playing a role in balancing the ratio of zwitterionic and anionic phospholipids, which is thought to be important for normal membrane function. In Blochmanniella floridana, this protein is CDP-diacylglycerol--glycerol-3-phosphate 3-phosphatidyltransferase.